A 206-amino-acid chain; its full sequence is Inactive ribonuclease-like protein 9 (206 aa).

The N-terminal stretch at 1 to 26 (MMRTLITTHSLLLFLLLLQLLQPLQF) is a signal peptide. Disulfide bonds link C99–C154, C117–C169, and C124–C131. The N-linked (GlcNAc...) asparagine glycan is linked to N132.

It belongs to the pancreatic ribonuclease family.

The protein localises to the secreted. Does not exhibit any ribonuclease activity. This is Inactive ribonuclease-like protein 9 (RNASE9) from Saimiri boliviensis boliviensis (Bolivian squirrel monkey).